We begin with the raw amino-acid sequence, 245 residues long: Ubiquinone/menaquinone biosynthesis C-methyltransferase UbiE (245 aa).

Residues T71, D92, and 118–119 each bind S-adenosyl-L-methionine; that span reads DA.

This sequence belongs to the class I-like SAM-binding methyltransferase superfamily. MenG/UbiE family.

The catalysed reaction is a 2-demethylmenaquinol + S-adenosyl-L-methionine = a menaquinol + S-adenosyl-L-homocysteine + H(+). The enzyme catalyses a 2-methoxy-6-(all-trans-polyprenyl)benzene-1,4-diol + S-adenosyl-L-methionine = a 5-methoxy-2-methyl-3-(all-trans-polyprenyl)benzene-1,4-diol + S-adenosyl-L-homocysteine + H(+). It participates in quinol/quinone metabolism; menaquinone biosynthesis; menaquinol from 1,4-dihydroxy-2-naphthoate: step 2/2. It functions in the pathway cofactor biosynthesis; ubiquinone biosynthesis. Its function is as follows. Methyltransferase required for the conversion of demethylmenaquinol (DMKH2) to menaquinol (MKH2) and the conversion of 2-polyprenyl-6-methoxy-1,4-benzoquinol (DDMQH2) to 2-polyprenyl-3-methyl-6-methoxy-1,4-benzoquinol (DMQH2). This chain is Ubiquinone/menaquinone biosynthesis C-methyltransferase UbiE, found in Neisseria meningitidis serogroup B (strain ATCC BAA-335 / MC58).